Here is a 34-residue protein sequence, read N- to C-terminus: DCLGFMRKCIPDNDKCCRPNLVCSRTHKWCKYVF.

Disulfide bonds link Cys2/Cys17, Cys9/Cys23, and Cys16/Cys30. The residue at position 34 (Phe34) is a Phenylalanine amide.

This sequence belongs to the neurotoxin 10 (Hwtx-1) family. 08 (Gtx1-15) subfamily. In terms of tissue distribution, expressed by the venom gland.

The protein localises to the secreted. Functionally, potent voltage-gated sodium channel blocker. Potently inhibits the voltage-gated sodium channels Nav1.7/SCN9A (IC(50)=0.58-10 nM). Also shows a moderate activity on Nav1.1/SCN1A (IC(50)=6 nM), Nav1.2/SCN2A (IC(50)=5-128 nM), Nav1.3/SCN3A (IC(50)=20.3-170 nM), and Nav1.6/SCN8A (IC(50)=17-20.1 nM). Shows an unclear inhibition of Nav1.4/SCN4A (IC(50)=200 nM to &gt;10 uM), Nav1.5/SCN5A (IC(50)=140 nM to &gt;10 uM) and Nav1.8/SCN10A (IC(50)=68-12200 nM). Weakly blocks the low voltage-gated calcium channels Cav3.1/CACNA1G (30% inhibition of the peak current at 9.8 nM). shows moderate affinity for lipid bilayers. In vivo, when tested on the OD1-induced mouse model of Nav1.7/SCN9A-mediated pain, the toxin is effective when co-administered with OD1, but lacks efficacy when delivered systemically. This Grammostola porteri (Tarantula spider) protein is Toxin GTx1-15.